Here is a 65-residue protein sequence, read N- to C-terminus: Large ribosomal subunit protein bL32 (65 aa).

The span at 1-18 (MAVPKRRHSKSRTRKRRS) shows a compositional bias: basic residues. The segment at 1 to 20 (MAVPKRRHSKSRTRKRRSTY) is disordered.

The protein belongs to the bacterial ribosomal protein bL32 family.

This Salinibacter ruber (strain DSM 13855 / M31) protein is Large ribosomal subunit protein bL32.